Consider the following 57-residue polypeptide: Putative antitoxin VapB4 (57 aa).

Functionally, possibly the antitoxin component of a type II toxin-antitoxin (TA) system. Its cognate toxin is VapC4 (Potential). The chain is Putative antitoxin VapB4 (vapB4) from Methanocaldococcus jannaschii (strain ATCC 43067 / DSM 2661 / JAL-1 / JCM 10045 / NBRC 100440) (Methanococcus jannaschii).